Here is a 297-residue protein sequence, read N- to C-terminus: Inactive beta selinene synthase (297 aa).

This sequence belongs to the terpene synthase family. As to quaternary structure, monomer.

The protein localises to the cytoplasm. Functionally, inactive selinene synthase. This Zea mays (Maize) protein is Inactive beta selinene synthase.